The following is a 714-amino-acid chain: Forkhead box protein P2 (714 aa).

The span at 1–28 (MMQESATETISNSSMNQNGMSTLSSQLD) shows a compositional bias: polar residues. Disordered regions lie at residues 1 to 45 (MMQE…SEVS) and 284 to 338 (KHGG…TGAS). Over residues 291–304 (TTNNSSSTTSSTTS) the composition is skewed to low complexity. The span at 314 to 323 (SIVNGQSSVL) shows a compositional bias: polar residues. Residues 325 to 336 (ARRDSSSHEETG) show a composition bias toward basic and acidic residues. Residues 345–370 (GVCKWPGCESICEDFGQFLKHLNNEH) form a C2H2-type zinc finger. Residues 387–408 (VQQLEIQLSKERERLQAMMTHL) are leucine-zipper. Positions 421 to 425 (PLNLV) are CTBP1-binding. Residues 437–458 (TSPQSLPQTPTTPTAPVTPITQ) show a composition bias toward low complexity. Positions 437–464 (TSPQSLPQTPTTPTAPVTPITQGPSVIT) are disordered. Residues 503 to 593 (RPPFTYATLI…SQKITGSPTL (91 aa)) constitute a DNA-binding region (fork-head). Disordered stretches follow at residues 648-667 (LDHI…QPHI) and 677-714 (VIAE…EDLE). A compositionally biased stretch (acidic residues) spans 698–714 (LEDDREIEEEPLSEDLE).

Forms homodimers and heterodimers with FOXP1 and FOXP4. Dimerization is required for DNA-binding. Interacts with CTBP1. Interacts with FOXP1. Interacts with TBR1. Interacts with ZMYM2.

It is found in the nucleus. Transcriptional repressor that may play a role in the specification and differentiation of lung epithelium. May also play a role in developing neural, gastrointestinal and cardiovascular tissues. Can act with CTBP1 to synergistically repress transcription but CTPBP1 is not essential. Plays a role in synapse formation by regulating SRPX2 levels. The sequence is that of Forkhead box protein P2 (FOXP2) from Macaca mulatta (Rhesus macaque).